The primary structure comprises 372 residues: NAD(P)H-quinone oxidoreductase subunit 1 (372 aa).

The next 8 helical transmembrane spans lie at 27-47, 97-117, 128-148, 166-186, 204-224, 266-286, 308-328, and 347-367; these read LIWLPLPMLLVLVAAVVGVLV, LLFTLGPVLVVVPVILSWLIV, VGVGIFLWISLSSVQPIGLLM, AAQSISYEIPLALAVLAVVMM, ILSWNIWRQPVGFLIFWICAL, VLSALLVSVLYLGGWGFPVPV, ATGIVMTVLKAYLLVFIAILL, and FLLPLALVNLLVTAALKLAFP.

This sequence belongs to the complex I subunit 1 family. NDH-1 is composed of at least 11 different subunits.

Its subcellular location is the cellular thylakoid membrane. The catalysed reaction is a plastoquinone + NADH + (n+1) H(+)(in) = a plastoquinol + NAD(+) + n H(+)(out). It carries out the reaction a plastoquinone + NADPH + (n+1) H(+)(in) = a plastoquinol + NADP(+) + n H(+)(out). Functionally, NDH-1 shuttles electrons from an unknown electron donor, via FMN and iron-sulfur (Fe-S) centers, to quinones in the respiratory and/or the photosynthetic chain. The immediate electron acceptor for the enzyme in this species is believed to be plastoquinone. Couples the redox reaction to proton translocation, and thus conserves the redox energy in a proton gradient. In Synechococcus sp. (strain WH7803), this protein is NAD(P)H-quinone oxidoreductase subunit 1.